The following is an 883-amino-acid chain: Alanine--tRNA ligase (883 aa).

Zn(2+)-binding residues include His-570, His-574, Cys-672, and His-676.

It belongs to the class-II aminoacyl-tRNA synthetase family. The cofactor is Zn(2+).

The protein localises to the cytoplasm. The enzyme catalyses tRNA(Ala) + L-alanine + ATP = L-alanyl-tRNA(Ala) + AMP + diphosphate. Catalyzes the attachment of alanine to tRNA(Ala) in a two-step reaction: alanine is first activated by ATP to form Ala-AMP and then transferred to the acceptor end of tRNA(Ala). Also edits incorrectly charged Ser-tRNA(Ala) and Gly-tRNA(Ala) via its editing domain. This is Alanine--tRNA ligase from Heliobacterium modesticaldum (strain ATCC 51547 / Ice1).